The chain runs to 312 residues: Src-like-adapter (312 aa).

The segment at 1 to 33 is disordered; the sequence is MLCRLPGPSTSRGEKEMGNSMKSTPAPLERPLS. An SH3 domain is found at 38 to 98; that stretch reads LESDFLAVLN…PGICVARVYH (61 aa). Residues 100–191 enclose the SH2 domain; it reads WLFEGLGRDK…GLCCVLTTPC (92 aa). The SLA C-terminal stretch occupies residues 206 to 312; it reads CTSPGSPVTL…TQKTKALTAT (107 aa). Ser-274 is modified (phosphoserine).

As to quaternary structure, homodimer. Interacts with phosphorylated CBL, SYK and LAT. Homodimerization and interaction with phosphorylated CBL occurs via its C-terminal domain. Interacts with PDGFRB and EPHA2. Interacts with phosphorylated proteins ZAP70; CD3Z; VAV1 and LCP2 via its SH2 domain. In terms of processing, phosphorylated.

The protein localises to the cytoplasm. Its subcellular location is the endosome. In terms of biological role, adapter protein, which negatively regulates T-cell receptor (TCR) signaling. Inhibits T-cell antigen-receptor induced activation of nuclear factor of activated T-cells. Involved in the negative regulation of positive selection and mitosis of T-cells. May act by linking signaling proteins such as ZAP70 with CBL, leading to a CBL dependent degradation of signaling proteins. The polypeptide is Src-like-adapter (Sla) (Rattus norvegicus (Rat)).